Consider the following 470-residue polypeptide: Glutamate--tRNA ligase (470 aa).

The 'HIGH' region motif lies at 9–19; it reads PSPTGFLHVGG. The 'KMSKS' region signature appears at 236 to 240; it reads RLSKR. Lysine 239 lines the ATP pocket.

It belongs to the class-I aminoacyl-tRNA synthetase family. Glutamate--tRNA ligase type 1 subfamily. As to quaternary structure, monomer.

It is found in the cytoplasm. The catalysed reaction is tRNA(Glu) + L-glutamate + ATP = L-glutamyl-tRNA(Glu) + AMP + diphosphate. Functionally, catalyzes the attachment of glutamate to tRNA(Glu) in a two-step reaction: glutamate is first activated by ATP to form Glu-AMP and then transferred to the acceptor end of tRNA(Glu). In Legionella pneumophila (strain Paris), this protein is Glutamate--tRNA ligase.